Reading from the N-terminus, the 224-residue chain is Non-structural protein V (224 aa).

A compositionally biased stretch (polar residues) spans 54-65; that stretch reads QKNIQHPTASHQ. Disordered regions lie at residues 54–96 and 150–171; these read QKNI…DPEP and TEFK…GGHR. Positions 170, 189, 193, 205, 207, 210, 214, and 217 each coordinate Zn(2+).

The protein belongs to the paramyxoviruses V protein family. Interacts with host IFIH1/MDA5 and DHX58/LGP2. Forms with host DDB1, CUL4A, STAT1, STAT2 and STAT3 the mumps virus V-dependent complex (VDC).

It is found in the virion. Its subcellular location is the host cytoplasm. Plays an essential role in the inhibition of host immune response. Prevents the establishment of cellular antiviral state by blocking interferon-alpha/beta (IFN-alpha/beta) production and signaling pathway. Interacts with host IFIH1/MDA5 and DHX58/LGP2 to inhibit the transduction pathway involved in the activation of IFN-beta promoter, thus protecting the virus against cell antiviral state. Blocks the type I and II interferon signaling pathways by interacting with host STAT1, STAT2 and STAT3, and mediating their ubiquitination and subsequent proteasomal degradation. This is Non-structural protein V from Mumps virus (strain SBL) (MuV).